We begin with the raw amino-acid sequence, 113 residues long: Putative increased recombination centers protein 14 (113 aa).

This Saccharomyces cerevisiae (strain ATCC 204508 / S288c) (Baker's yeast) protein is Putative increased recombination centers protein 14 (IRC14).